Reading from the N-terminus, the 409-residue chain is Na(+)-translocating NADH-quinone reductase subunit F (409 aa).

Residues Phe5–Ile25 form a helical membrane-spanning segment. The region spanning Gly34–Val128 is the 2Fe-2S ferredoxin-type domain. Residues Cys71, Cys77, Cys80, and Cys112 each contribute to the [2Fe-2S] cluster site. The FAD-binding FR-type domain maps to Val131–Lys271.

This sequence belongs to the NqrF family. In terms of assembly, composed of six subunits; NqrA, NqrB, NqrC, NqrD, NqrE and NqrF. [2Fe-2S] cluster is required as a cofactor. The cofactor is FAD.

The protein localises to the cell inner membrane. It carries out the reaction a ubiquinone + n Na(+)(in) + NADH + H(+) = a ubiquinol + n Na(+)(out) + NAD(+). Its function is as follows. NQR complex catalyzes the reduction of ubiquinone-1 to ubiquinol by two successive reactions, coupled with the transport of Na(+) ions from the cytoplasm to the periplasm. The first step is catalyzed by NqrF, which accepts electrons from NADH and reduces ubiquinone-1 to ubisemiquinone by a one-electron transfer pathway. The polypeptide is Na(+)-translocating NADH-quinone reductase subunit F (Actinobacillus succinogenes (strain ATCC 55618 / DSM 22257 / CCUG 43843 / 130Z)).